A 324-amino-acid chain; its full sequence is Beta-ketoacyl-[acyl-carrier-protein] synthase III (324 aa).

Catalysis depends on residues C112 and H251. Residues Q252–R256 form an ACP-binding region. The active site involves N281.

It belongs to the thiolase-like superfamily. FabH family. As to quaternary structure, homodimer.

It localises to the cytoplasm. The enzyme catalyses malonyl-[ACP] + acetyl-CoA + H(+) = 3-oxobutanoyl-[ACP] + CO2 + CoA. It functions in the pathway lipid metabolism; fatty acid biosynthesis. Its function is as follows. Catalyzes the condensation reaction of fatty acid synthesis by the addition to an acyl acceptor of two carbons from malonyl-ACP. Catalyzes the first condensation reaction which initiates fatty acid synthesis and may therefore play a role in governing the total rate of fatty acid production. Possesses both acetoacetyl-ACP synthase and acetyl transacylase activities. Its substrate specificity determines the biosynthesis of branched-chain and/or straight-chain of fatty acids. This is Beta-ketoacyl-[acyl-carrier-protein] synthase III from Clostridium perfringens (strain ATCC 13124 / DSM 756 / JCM 1290 / NCIMB 6125 / NCTC 8237 / Type A).